The primary structure comprises 82 residues: RNA-binding protein Hfq (82 aa).

Residues 9–69 (DHFLNQLRKE…ISTFSPARNV (61 aa)) enclose the Sm domain.

Belongs to the Hfq family. Homohexamer.

Its function is as follows. RNA chaperone that binds small regulatory RNA (sRNAs) and mRNAs to facilitate mRNA translational regulation in response to envelope stress, environmental stress and changes in metabolite concentrations. Also binds with high specificity to tRNAs. This Exiguobacterium sp. (strain ATCC BAA-1283 / AT1b) protein is RNA-binding protein Hfq.